A 335-amino-acid polypeptide reads, in one-letter code: Biotin synthase (335 aa).

The Radical SAM core domain maps to 53–276 (VEIEGIVSVK…RTILRFAGGR (224 aa)). [4Fe-4S] cluster is bound by residues cysteine 66, cysteine 70, and cysteine 73. Positions 109, 142, 201, and 271 each coordinate [2Fe-2S] cluster.

The protein belongs to the radical SAM superfamily. Biotin synthase family. In terms of assembly, homodimer. [4Fe-4S] cluster is required as a cofactor. [2Fe-2S] cluster serves as cofactor.

It catalyses the reaction (4R,5S)-dethiobiotin + (sulfur carrier)-SH + 2 reduced [2Fe-2S]-[ferredoxin] + 2 S-adenosyl-L-methionine = (sulfur carrier)-H + biotin + 2 5'-deoxyadenosine + 2 L-methionine + 2 oxidized [2Fe-2S]-[ferredoxin]. It participates in cofactor biosynthesis; biotin biosynthesis; biotin from 7,8-diaminononanoate: step 2/2. Its function is as follows. Catalyzes the conversion of dethiobiotin (DTB) to biotin by the insertion of a sulfur atom into dethiobiotin via a radical-based mechanism. The polypeptide is Biotin synthase (Acidothermus cellulolyticus (strain ATCC 43068 / DSM 8971 / 11B)).